The sequence spans 230 residues: Large ribosomal subunit protein uL3 (230 aa).

2 disordered regions span residues 125-149 (QAIGPRSHGGGGGSKPIRQTGSLGD) and 210-230 (PNPKNPVSLFVPNSDKEVKNE).

It belongs to the universal ribosomal protein uL3 family. As to quaternary structure, part of the 50S ribosomal subunit. Forms a cluster with proteins L14 and L19.

One of the primary rRNA binding proteins, it binds directly near the 3'-end of the 23S rRNA, where it nucleates assembly of the 50S subunit. This chain is Large ribosomal subunit protein uL3, found in Mesomycoplasma hyopneumoniae (strain 232) (Mycoplasma hyopneumoniae).